A 273-amino-acid polypeptide reads, in one-letter code: Citrate lyase subunit beta-like protein (273 aa).

Substrate-binding residues include Arg-64 and Glu-112. Residues Glu-112 and Asp-138 each contribute to the Mg(2+) site.

Belongs to the HpcH/HpaI aldolase family. Citrate lyase beta subunit-like subfamily. As to quaternary structure, homotrimer. Mg(2+) serves as cofactor.

In terms of biological role, may play a role in fatty acid biosynthesis. This is Citrate lyase subunit beta-like protein (citE) from Mycobacterium tuberculosis (strain CDC 1551 / Oshkosh).